Reading from the N-terminus, the 41-residue chain is Photosystem I reaction center subunit IX (41 aa).

A helical transmembrane segment spans residues 7–27; that stretch reads YLSTAPVLLTIWLTFTAGFII.

It belongs to the PsaJ family.

It localises to the plastid. It is found in the chloroplast thylakoid membrane. In terms of biological role, may help in the organization of the PsaE and PsaF subunits. The protein is Photosystem I reaction center subunit IX of Phaeodactylum tricornutum (strain CCAP 1055/1).